The sequence spans 86 residues: Omega-theraphotoxin-Hhn1f 2 (86 aa).

The signal sequence occupies residues Met-1 to Ala-21. Positions Ser-22 to Arg-50 are excised as a propeptide. Disulfide bonds link Cys-52–Cys-66, Cys-59–Cys-71, and Cys-65–Cys-78.

This sequence belongs to the neurotoxin 10 (Hwtx-1) family. 17 (Hntx-9) subfamily. Expressed by the venom gland.

The protein localises to the secreted. Its function is as follows. Ion channel inhibitor. This is Omega-theraphotoxin-Hhn1f 2 from Cyriopagopus hainanus (Chinese bird spider).